The primary structure comprises 253 residues: Ethylene-responsive transcription factor RAP2-11 (253 aa).

Positions 21–78 (KFVGVRQRPSGKWVAEIKDTTQKIRMWLGTFETAEEAARAYDEAACLLRGSNTRTNFA) form a DNA-binding region, AP2/ERF.

Belongs to the AP2/ERF transcription factor family. ERF subfamily.

The protein resides in the nucleus. In terms of biological role, probably acts as a transcriptional activator. Binds to the GCC-box pathogenesis-related promoter element. May be involved in the regulation of gene expression by stress factors and by components of stress signal transduction pathways. The polypeptide is Ethylene-responsive transcription factor RAP2-11 (RAP2-11) (Arabidopsis thaliana (Mouse-ear cress)).